The chain runs to 149 residues: Alpha-crystallin A chain (149 aa).

Residues 41–149 (LFRTVLESGI…DTSYSERPIP (109 aa)) enclose the sHSP domain. Zn(2+)-binding residues include His-89, Glu-91, and His-96.

Belongs to the small heat shock protein (HSP20) family. Heteropolymer composed of three CRYAA and one CRYAB subunits. Inter-subunit bridging via zinc ions enhances stability, which is crucial as there is no protein turn over in the lens. Zinc coordination is achieved at least by His-89, Glu-91 and His-96. His-83 and Glu-85 come from the same molecule within the oligomer, while His-90 residue is provided by another molecule. Can also form homodimers and homotetramers (dimers of dimers) which serve as the building blocks of homooligomers.

It localises to the cytoplasm. Its subcellular location is the nucleus. Contributes to the transparency and refractive index of the lens. May act as a chaperone, preventing aggregation of various proteins under a wide range of stress conditions. In Trachemys scripta elegans (Red-eared slider turtle), this protein is Alpha-crystallin A chain (CRYAA).